A 110-amino-acid chain; its full sequence is Flagellar hook-basal body complex protein FliE (110 aa).

It belongs to the FliE family.

The protein localises to the bacterial flagellum basal body. This is Flagellar hook-basal body complex protein FliE from Ralstonia nicotianae (strain ATCC BAA-1114 / GMI1000) (Ralstonia solanacearum).